We begin with the raw amino-acid sequence, 34 residues long: MEVNILAFIATALFILIPTAFLLIIYVKTVSQND.

A helical transmembrane segment spans residues 5–25 (ILAFIATALFILIPTAFLLII).

The protein belongs to the PsbM family. In terms of assembly, PSII is composed of 1 copy each of membrane proteins PsbA, PsbB, PsbC, PsbD, PsbE, PsbF, PsbH, PsbI, PsbJ, PsbK, PsbL, PsbM, PsbT, PsbX, PsbY, PsbZ, Psb30/Ycf12, at least 3 peripheral proteins of the oxygen-evolving complex and a large number of cofactors. It forms dimeric complexes.

The protein localises to the plastid. It is found in the chloroplast thylakoid membrane. In terms of biological role, one of the components of the core complex of photosystem II (PSII). PSII is a light-driven water:plastoquinone oxidoreductase that uses light energy to abstract electrons from H(2)O, generating O(2) and a proton gradient subsequently used for ATP formation. It consists of a core antenna complex that captures photons, and an electron transfer chain that converts photonic excitation into a charge separation. This subunit is found at the monomer-monomer interface. The chain is Photosystem II reaction center protein M from Lolium perenne (Perennial ryegrass).